The chain runs to 190 residues: Somatotropin (190 aa).

An N-terminal signal peptide occupies residues 1–17 (MNRVILLLSVMCVGVSS). Intrachain disulfides connect Cys-69–Cys-163 and Cys-180–Cys-188.

The protein belongs to the somatotropin/prolactin family.

It localises to the secreted. Growth hormone plays an important role in growth control and is involved in the regulation of several anabolic processes. Implicated as an osmoregulatory substance important for seawater adaptation. The chain is Somatotropin (gh) from Paralichthys olivaceus (Bastard halibut).